Here is a 198-residue protein sequence, read N- to C-terminus: Na(+)-translocating NADH-quinone reductase subunit E (198 aa).

The next 6 helical transmembrane spans lie at 11–31 (SIFIENLALSFFLGMCTFLAV), 39–59 (MGLGIAVIVVQTVAVPANNLI), 77–97 (FLSFITFIGVIAALVQILEMA), 110–130 (GIFLPLITVNCAIFGGVSFMV), 140–160 (VVYGVGSGAGWMLAIVAMAGI), and 176–196 (LGITFITAGLMALGFMSFSGI).

The protein belongs to the NqrDE/RnfAE family. As to quaternary structure, composed of six subunits; NqrA, NqrB, NqrC, NqrD, NqrE and NqrF.

The protein resides in the cell inner membrane. It carries out the reaction a ubiquinone + n Na(+)(in) + NADH + H(+) = a ubiquinol + n Na(+)(out) + NAD(+). Functionally, NQR complex catalyzes the reduction of ubiquinone-1 to ubiquinol by two successive reactions, coupled with the transport of Na(+) ions from the cytoplasm to the periplasm. NqrA to NqrE are probably involved in the second step, the conversion of ubisemiquinone to ubiquinol. This chain is Na(+)-translocating NADH-quinone reductase subunit E, found in Aeromonas hydrophila subsp. hydrophila (strain ATCC 7966 / DSM 30187 / BCRC 13018 / CCUG 14551 / JCM 1027 / KCTC 2358 / NCIMB 9240 / NCTC 8049).